The sequence spans 279 residues: Acyl-[acyl-carrier-protein]--UDP-N-acetylglucosamine O-acyltransferase (279 aa).

Residues 260–279 (AAKEAFQEESVDKEGALVES) form a disordered region.

This sequence belongs to the transferase hexapeptide repeat family. LpxA subfamily. In terms of assembly, homotrimer.

The protein resides in the cytoplasm. It catalyses the reaction a (3R)-hydroxyacyl-[ACP] + UDP-N-acetyl-alpha-D-glucosamine = a UDP-3-O-[(3R)-3-hydroxyacyl]-N-acetyl-alpha-D-glucosamine + holo-[ACP]. Its pathway is glycolipid biosynthesis; lipid IV(A) biosynthesis; lipid IV(A) from (3R)-3-hydroxytetradecanoyl-[acyl-carrier-protein] and UDP-N-acetyl-alpha-D-glucosamine: step 1/6. Involved in the biosynthesis of lipid A, a phosphorylated glycolipid that anchors the lipopolysaccharide to the outer membrane of the cell. The chain is Acyl-[acyl-carrier-protein]--UDP-N-acetylglucosamine O-acyltransferase from Chlamydia abortus (strain DSM 27085 / S26/3) (Chlamydophila abortus).